Here is a 287-residue protein sequence, read N- to C-terminus: ATP synthase gamma chain (287 aa).

It belongs to the ATPase gamma chain family. In terms of assembly, F-type ATPases have 2 components, CF(1) - the catalytic core - and CF(0) - the membrane proton channel. CF(1) has five subunits: alpha(3), beta(3), gamma(1), delta(1), epsilon(1). CF(0) has three main subunits: a, b and c.

Its subcellular location is the cell inner membrane. Produces ATP from ADP in the presence of a proton gradient across the membrane. The gamma chain is believed to be important in regulating ATPase activity and the flow of protons through the CF(0) complex. In Xylella fastidiosa (strain M12), this protein is ATP synthase gamma chain.